Reading from the N-terminus, the 338-residue chain is MTRISLTRYLVEEQRKHNTIQPELRLLIEVVARACKAISNAVSKGALAGVLGSAGTGNVQGETQQKLDVIANEVLLDANEWGGHLAAMASEEMESFYEIPNRYPKGEYLLMFDPLDGSSNIDVNVSIGTIFSVLHMPKPGQTVTEADFMQPGTHQVAAGYAVYGPQTTLVLTVGNGVHMFTLDREAGSFVLTHSNVTIPDDTKEFAINMSNMRHWAPPVRRYIDECLAGEEGPRGKNFNMRWVASMVADVHRILTRGGVFMYPWDKREPEKPGKLRLMYEANPMAMLVEQAGGAATNGHQRIMDVQPEKLHQRVSVILGSKNEVERVTRYHLEAEDKA.

4 residues coordinate Mg(2+): Glu91, Asp113, Leu115, and Asp116. Residues 116–119, Asn208, and Lys274 contribute to the substrate site; that span reads DGSS. Glu280 lines the Mg(2+) pocket.

This sequence belongs to the FBPase class 1 family. Homotetramer. It depends on Mg(2+) as a cofactor.

It is found in the cytoplasm. The catalysed reaction is beta-D-fructose 1,6-bisphosphate + H2O = beta-D-fructose 6-phosphate + phosphate. It participates in carbohydrate biosynthesis; gluconeogenesis. The sequence is that of Fructose-1,6-bisphosphatase class 1 1 from Cupriavidus necator (strain ATCC 17699 / DSM 428 / KCTC 22496 / NCIMB 10442 / H16 / Stanier 337) (Ralstonia eutropha).